A 1347-amino-acid polypeptide reads, in one-letter code: Protein dispatched homolog 3 (1347 aa).

Topologically, residues 1 to 67 are cytoplasmic; the sequence is MDSEDDPLLQ…LGWAFTNPCC (67 aa). A helical transmembrane segment spans residues 68 to 88; that stretch reads AGLVLFLGCSIPMVLSAFMFL. Over 89–417 the chain is Lumenal; the sequence is YYPPLDIDIS…YEVRRTFNND (329 aa). Positions 156 to 207 are disordered; that stretch reads GNHSRPASRAPRSAPRDTVATQTSAANSSERRRREAPSPEGQVTNQSRARRG. Asn157 is a glycosylation site (N-linked (GlcNAc...) asparagine). The segment covering 159–168 has biased composition (low complexity); the sequence is SRPASRAPRS. Positions 412 to 570 constitute an SSD domain; it reads RTFNNDMLLA…LFTMPAALGL (159 aa). A helical transmembrane segment spans residues 418-438; it reads MLLAFISSSCIAALVYILTSC. Residue Ser439 is a topological domain, cytoplasmic. The helical transmembrane segment at 440–460 threads the bilayer; it reads VFLSFFGIASIGLSCLVALFL. At 461 to 463 the chain is on the lumenal side; that stretch reads YHV. The helical transmembrane segment at 464–484 threads the bilayer; the sequence is VFGIQYLGILNGVAAFVIVGI. The Cytoplasmic segment spans residues 485–528; it reads GVDDVFVFINTYRQATHLEDPQLRMIHTIQTAGKATFFTSLTTA. A helical transmembrane segment spans residues 529–549; that stretch reads AAYAANVFSQIPAVHDFGLFM. Position 550 (Ser550) is a topological domain, lumenal. A helical transmembrane segment spans residues 551–571; that stretch reads LIVTCCWLAVLFTMPAALGLW. The Cytoplasmic segment spans residues 572–684; it reads SLYMAPLESS…WVLWAAVKSR (113 aa). Residues 685 to 705 form a helical membrane-spanning segment; it reads WVIVGLFASILILSLVFASRL. The Lumenal segment spans residues 706–1137; that stretch reads RPASRAPLLF…IFMEIIGVQS (432 aa). An N-linked (GlcNAc...) asparagine glycan is attached at Asn976. A helical membrane pass occupies residues 1138–1158; the sequence is ALYGLVLSLLICVAAVAVFTT. Position 1159 (His1159) is a topological domain, cytoplasmic. A helical transmembrane segment spans residues 1160–1180; the sequence is VLLLLPVLLSILGIVCLVVTI. Over 1181–1246 the chain is Lumenal; that stretch reads MYWSGWEMGA…TLEAVRHVGV (66 aa). A helical transmembrane segment spans residues 1247 to 1267; the sequence is AIVSSALTTVIATVPLFFCII. Topologically, residues 1268 to 1281 are cytoplasmic; the sequence is APFAKFGKIVALNT. The chain crosses the membrane as a helical span at residues 1282–1302; sequence GVSILYTLTVSTALLGIMAPG. The Lumenal portion of the chain corresponds to 1303–1310; sequence SFTRTRTS. A helical membrane pass occupies residues 1311 to 1331; sequence FLKALGAVLLAGALGLGACLV. Residues 1332-1347 lie on the Cytoplasmic side of the membrane; that stretch reads LLRSGYKIPLPSGATL.

Belongs to the patched family. In terms of tissue distribution, expressed in brain, retina, testis and thymus.

The protein resides in the endoplasmic reticulum membrane. It localises to the nucleus membrane. The protein localises to the cytoplasmic vesicle membrane. Functionally, plays a role in neuronal proliferation and differentiation. Plays a role in the accumulation of cellular cholesterol. Involved in intracellular lipid droplet formation. May contribute to cholesterol homeostasis in neuronal cells. This chain is Protein dispatched homolog 3, found in Mus musculus (Mouse).